Consider the following 216-residue polypeptide: Adenylate kinase (216 aa).

10–15 (GAGKGT) is an ATP binding site. The tract at residues 30 to 59 (STGDMLRAAVSAQTEVGKRAKAVMDAGKLV) is NMP. Residues Thr31, Arg36, 57–59 (KLV), 85–88 (GFPR), and Gln92 contribute to the AMP site. Positions 126–163 (GRYTCANCGTGYHDENLKPKVEGVCDKCGSTHFKRRPD) are LID. Arg127 is a binding site for ATP. Zn(2+) contacts are provided by Cys130, Cys133, Cys150, and Cys153. Arg160 and Arg172 together coordinate AMP. Residue Ala200 coordinates ATP.

Belongs to the adenylate kinase family. In terms of assembly, monomer.

The protein resides in the cytoplasm. The catalysed reaction is AMP + ATP = 2 ADP. It functions in the pathway purine metabolism; AMP biosynthesis via salvage pathway; AMP from ADP: step 1/1. In terms of biological role, catalyzes the reversible transfer of the terminal phosphate group between ATP and AMP. Plays an important role in cellular energy homeostasis and in adenine nucleotide metabolism. The protein is Adenylate kinase of Allorhizobium ampelinum (strain ATCC BAA-846 / DSM 112012 / S4) (Agrobacterium vitis (strain S4)).